The following is a 571-amino-acid chain: Proline--tRNA ligase (571 aa).

The protein belongs to the class-II aminoacyl-tRNA synthetase family. ProS type 1 subfamily. As to quaternary structure, homodimer.

It localises to the cytoplasm. It carries out the reaction tRNA(Pro) + L-proline + ATP = L-prolyl-tRNA(Pro) + AMP + diphosphate. Its function is as follows. Catalyzes the attachment of proline to tRNA(Pro) in a two-step reaction: proline is first activated by ATP to form Pro-AMP and then transferred to the acceptor end of tRNA(Pro). As ProRS can inadvertently accommodate and process non-cognate amino acids such as alanine and cysteine, to avoid such errors it has two additional distinct editing activities against alanine. One activity is designated as 'pretransfer' editing and involves the tRNA(Pro)-independent hydrolysis of activated Ala-AMP. The other activity is designated 'posttransfer' editing and involves deacylation of mischarged Ala-tRNA(Pro). The misacylated Cys-tRNA(Pro) is not edited by ProRS. The sequence is that of Proline--tRNA ligase from Vibrio atlanticus (strain LGP32) (Vibrio splendidus (strain Mel32)).